The primary structure comprises 529 residues: Probable alpha-galactosidase A (529 aa).

The N-terminal stretch at 1 to 19 (MKALFAAITMAHALLQTQA) is a signal peptide. Cysteines 42 and 74 form a disulfide. N-linked (GlcNAc...) asparagine glycosylation is found at Asn-45, Asn-83, Asn-89, and Asn-119. An intrachain disulfide couples Cys-122 to Cys-152. Asp-150 (nucleophile) is an active-site residue. An N-linked (GlcNAc...) asparagine glycan is attached at Asn-199. The active-site Proton donor is Asp-208. A glycan (N-linked (GlcNAc...) asparagine) is linked at Asn-351. Positions 408 to 528 (RVDAVSTGIV…GLPSGVRVSG (121 aa)) constitute a Ricin B-type lectin domain. Intrachain disulfides connect Cys-425–Cys-438 and Cys-462–Cys-475.

Belongs to the glycosyl hydrolase 27 family.

It localises to the secreted. It catalyses the reaction Hydrolysis of terminal, non-reducing alpha-D-galactose residues in alpha-D-galactosides, including galactose oligosaccharides, galactomannans and galactolipids.. Its function is as follows. Hydrolyzes a variety of simple alpha-D-galactoside as well as more complex molecules such as oligosaccharides and polysaccharides. The sequence is that of Probable alpha-galactosidase A (aglA) from Aspergillus terreus (strain NIH 2624 / FGSC A1156).